The chain runs to 241 residues: Thyroid transcription factor 1-associated protein 26 (241 aa).

Disordered regions lie at residues Met-1 to Val-22 and Lys-182 to Lys-205. Over residues Lys-186–Arg-202 the composition is skewed to basic and acidic residues.

Belongs to the TAP26 family. As to quaternary structure, interacts with NKX2-1. Ubiquitously expressed. In lung, expression is restricted to the alveolar epithelial cells.

It is found in the nucleus. Its function is as follows. Component of the transcription complexes of the pulmonary surfactant-associated protein-B (SFTPB) and -C (SFTPC). Enhances homeobox protein Nkx-2.1-activated SFTPB and SFTPC promoter activities. The polypeptide is Thyroid transcription factor 1-associated protein 26 (CCDC59) (Homo sapiens (Human)).